Consider the following 159-residue polypeptide: Putative viral CXC chemokine 2 (159 aa).

Intrachain disulfides connect Cys-50/Cys-77 and Cys-52/Cys-93.

The protein belongs to the intercrine alpha (chemokine CxC) family.

The protein is Putative viral CXC chemokine 2 (UL147) of Human cytomegalovirus (strain Merlin) (HHV-5).